We begin with the raw amino-acid sequence, 147 residues long: UPF0460 protein in nifX-nifW intergenic region (147 aa).

This sequence belongs to the UPF0460 family.

The sequence is that of UPF0460 protein in nifX-nifW intergenic region from Frankia alni.